A 335-amino-acid polypeptide reads, in one-letter code: MKRIAVLTSGGDAPGMNAAIRAVVRQAISEGMEVFGIYDGYAGMVAGEIHPLDAASVGDIISRGGTFLHSARYPEFAQLEGQLKGIEQLKKHGIEGVVVIGGDGSYHGAMRLTEHGFPAIGLPGTIDNDIVGTDFTIGFDTAVTTAMDAIDKIRDTSSSHRRTFVIEVMGRNAGDIALWAGIATGADEIIIPEADFKMEDIVASIKAGYECGKKHNIIVLAEGVMSAAEFGQKLKEAGDTSDLRVTELGHIQRGGSPTARDRVLASRMGAHAVKLLKEGIGGVAVGIRNEKMVENPILGTAEEGALFSLTAEGKIVVNNPHKADIELSSLNKSLS.

Position 11 (Gly-11) interacts with ATP. Position 21-25 (21-25 (RAVVR)) interacts with ADP. ATP-binding positions include 72-73 (RY) and 102-105 (GDGS). Asp-103 contacts Mg(2+). Substrate is bound at residue 125–127 (TID). Asp-127 functions as the Proton acceptor in the catalytic mechanism. An ADP-binding site is contributed by Arg-154. Residues Arg-162 and 169 to 171 (MGR) contribute to the substrate site. ADP-binding positions include 185–187 (GAD) and 213–215 (KKH). Residues Glu-222, Arg-244, and 250–253 (HIQR) each bind substrate.

It belongs to the phosphofructokinase type A (PFKA) family. ATP-dependent PFK group I subfamily. Prokaryotic clade 'B1' sub-subfamily. As to quaternary structure, homotetramer. Mg(2+) is required as a cofactor.

It is found in the cytoplasm. The catalysed reaction is beta-D-fructose 6-phosphate + ATP = beta-D-fructose 1,6-bisphosphate + ADP + H(+). It participates in carbohydrate degradation; glycolysis; D-glyceraldehyde 3-phosphate and glycerone phosphate from D-glucose: step 3/4. Allosterically activated by ADP and other diphosphonucleosides, and allosterically inhibited by phosphoenolpyruvate. Functionally, catalyzes the phosphorylation of D-fructose 6-phosphate to fructose 1,6-bisphosphate by ATP, the first committing step of glycolysis. This is ATP-dependent 6-phosphofructokinase from Streptococcus pneumoniae serotype 19F (strain G54).